A 120-amino-acid chain; its full sequence is Small ribosomal subunit protein uS10 (120 aa).

Phosphoserine is present on residues Ser16 and Ser18.

The protein belongs to the universal ribosomal protein uS10 family. Expressed ubiquitously in embryos, highest expression is in the midgut.

This Drosophila melanogaster (Fruit fly) protein is Small ribosomal subunit protein uS10 (RpS20).